The sequence spans 722 residues: Polyribonucleotide nucleotidyltransferase (722 aa).

2 residues coordinate Mg(2+): aspartate 495 and aspartate 501. The KH domain maps to 562–621; that stretch reads PRLLSFRIDPELIGTVIGPGGRTIKGITERTNTKIDIEDGGIVTIASHDGVAAEEAQKII. The S1 motif domain occupies 631-699; it reads GEVFTGSITR…NRGRINLTLR (69 aa).

It belongs to the polyribonucleotide nucleotidyltransferase family. Mg(2+) serves as cofactor.

It is found in the cytoplasm. The catalysed reaction is RNA(n+1) + phosphate = RNA(n) + a ribonucleoside 5'-diphosphate. Functionally, involved in mRNA degradation. Catalyzes the phosphorolysis of single-stranded polyribonucleotides processively in the 3'- to 5'-direction. The chain is Polyribonucleotide nucleotidyltransferase from Prochlorococcus marinus (strain SARG / CCMP1375 / SS120).